The chain runs to 168 residues: Dual-action ribosomal maturation protein DarP (168 aa).

The protein belongs to the DarP family.

It localises to the cytoplasm. Member of a network of 50S ribosomal subunit biogenesis factors which assembles along the 30S-50S interface, preventing incorrect 23S rRNA structures from forming. Promotes peptidyl transferase center (PTC) maturation. The protein is Dual-action ribosomal maturation protein DarP of Neisseria meningitidis serogroup B (strain ATCC BAA-335 / MC58).